A 223-amino-acid polypeptide reads, in one-letter code: Killer cell lectin-like receptor subfamily B member 1B allele C (223 aa).

Residues 1–45 (MDTAVVYADLHLARTGEPKRESPPSLSPDTCQCPRWHRLALKLGC) are Cytoplasmic-facing. Positions 5–10 (VVYADL) match the ITIM motif motif. Positions 31–34 (CQCP) match the LCK-binding motif motif. A helical; Signal-anchor for type II membrane protein transmembrane segment spans residues 46 to 66 (ACFILLVLSVIGLGVLVLTLL). The Extracellular segment spans residues 67-223 (QKPLLQNSPA…LKRESTCNDS (157 aa)). The region spanning 101-211 (HRDKCFHVSQ…CDSDNIWICQ (111 aa)) is the C-type lectin domain. 2 disulfides stabilise this stretch: C122/C210 and C189/C202.

In terms of assembly, homodimer; disulfide-linked. Interacts with tyrosine kinase LCK. Binds PTPN6/SHP-1 in a phosphorylation-dependent manner. In terms of tissue distribution, expressed in a subset of natural killer cells.

It is found in the membrane. Its function is as follows. Receptor for CLEC2D/OCIL. Ligand-binding contributes to inhibition of cytotoxic natural killer (NK) cells. May mediate MHC class I-independent 'missing-self' recognition of allografts, tumor cells and virus-infected cells. This Rattus norvegicus (Rat) protein is Killer cell lectin-like receptor subfamily B member 1B allele C.